Consider the following 124-residue polypeptide: Large ribosomal subunit protein bL12 (124 aa).

Belongs to the bacterial ribosomal protein bL12 family. In terms of assembly, homodimer. Part of the ribosomal stalk of the 50S ribosomal subunit. Forms a multimeric L10(L12)X complex, where L10 forms an elongated spine to which 2 to 4 L12 dimers bind in a sequential fashion. Binds GTP-bound translation factors.

Functionally, forms part of the ribosomal stalk which helps the ribosome interact with GTP-bound translation factors. Is thus essential for accurate translation. The protein is Large ribosomal subunit protein bL12 of Cereibacter sphaeroides (strain ATCC 17025 / ATH 2.4.3) (Rhodobacter sphaeroides).